Reading from the N-terminus, the 184-residue chain is Ras-related protein Rap-1b (184 aa).

Residue 10–17 (GSGGVGKS) participates in GTP binding. The Effector region motif lies at 32 to 40 (YDPTIEDSY). GTP contacts are provided by residues 57–61 (DTAGT) and 116–119 (NKCD). Cys181 carries the cysteine methyl ester modification. Cys181 carries the S-geranylgeranyl cysteine lipid modification. The propeptide at 182-184 (HLL) is removed in mature form.

It belongs to the small GTPase superfamily. Ras family.

The protein resides in the cell membrane. It is found in the cytoplasm. The protein localises to the cytosol. It localises to the cell junction. It catalyses the reaction GTP + H2O = GDP + phosphate + H(+). Functionally, probable GTP-binding protein that possesses GTPase activity. May play a role in endothelial cell polarity and endothelial barrier function. The chain is Ras-related protein Rap-1b (rap1b) from Xenopus laevis (African clawed frog).